We begin with the raw amino-acid sequence, 99 residues long: uncharacterized protein (99 aa).

The helical transmembrane segment at 76–96 threads the bilayer; it reads VLLGLASGMIGGIIGMFMWVL.

The protein localises to the host membrane. This is an uncharacterized protein from Haemophilus phage HP1 (strain HP1c1) (Bacteriophage HP1).